Consider the following 191-residue polypeptide: Imidazoleglycerol-phosphate dehydratase (191 aa).

It belongs to the imidazoleglycerol-phosphate dehydratase family.

The protein localises to the cytoplasm. The enzyme catalyses D-erythro-1-(imidazol-4-yl)glycerol 3-phosphate = 3-(imidazol-4-yl)-2-oxopropyl phosphate + H2O. It functions in the pathway amino-acid biosynthesis; L-histidine biosynthesis; L-histidine from 5-phospho-alpha-D-ribose 1-diphosphate: step 6/9. The polypeptide is Imidazoleglycerol-phosphate dehydratase (Thermodesulfovibrio yellowstonii (strain ATCC 51303 / DSM 11347 / YP87)).